The sequence spans 838 residues: pre-rRNA 2'-O-ribose RNA methyltransferase FTSJ3 (838 aa).

5 residues coordinate S-adenosyl-L-methionine: Gly-56, Trp-58, Asp-76, Asp-92, and Asp-117. Catalysis depends on Lys-157, which acts as the Proton acceptor. Positions 332 to 367 are disordered; the sequence is ISLSSEEEEEGDEEEAVAETKQAPEEEEEREEEQLN. 3 positions are modified to phosphoserine: Ser-333, Ser-335, and Ser-336. Residues 336–348 show a composition bias toward acidic residues; it reads SEEEEEGDEEEAV. Residue Arg-390 is modified to Citrulline. The interval 453–482 is disordered; sequence IYVSDAEDDDDTSLESDLDPEELAGVRTHS. Acidic residues predominate over residues 457-474; it reads DAEDDDDTSLESDLDPEE. Phosphoserine is present on residues Ser-532 and Ser-545. The disordered stretch occupies residues 537 to 639; that stretch reads DADEALEISQ…GRGSKADEDG (103 aa). Lys-571 is covalently cross-linked (Glycyl lysine isopeptide (Lys-Gly) (interchain with G-Cter in SUMO2)). Ser-576 carries the phosphoserine modification. Glycyl lysine isopeptide (Lys-Gly) (interchain with G-Cter in SUMO2) cross-links involve residues Lys-634 and Lys-650. Ser-667 bears the Phosphoserine mark. A Glycyl lysine isopeptide (Lys-Gly) (interchain with G-Cter in SUMO2) cross-link involves residue Lys-669. Phosphoserine is present on Ser-679. A Glycyl lysine isopeptide (Lys-Gly) (interchain with G-Cter in SUMO2) cross-link involves residue Lys-701. Residues 730-768 adopt a coiled-coil conformation; it reads IKKVAEAKARKKRRVLKKLEQTKKKAEAVVNTVDISERE. Arg-774 carries the post-translational modification Citrulline. The segment covering 802 to 812 has biased composition (basic residues); that stretch reads VRRPAGVKGHF. The segment at 802–838 is disordered; that stretch reads VRRPAGVKGHFKVVDSRMKKDQRAQQRKEQKKKHKRK. Positions 813-829 are enriched in basic and acidic residues; it reads KVVDSRMKKDQRAQQRK.

The protein belongs to the class I-like SAM-binding methyltransferase superfamily. RNA methyltransferase RlmE family. SPB1 subfamily. In terms of assembly, interacts with NIP7. Citrullinated by PADI4.

The protein resides in the nucleus. It is found in the nucleolus. The catalysed reaction is a ribonucleotide in rRNA + S-adenosyl-L-methionine = a 2'-O-methylribonucleotide in rRNA + S-adenosyl-L-homocysteine + H(+). In terms of biological role, RNA 2'-O-methyltransferase involved in the processing of the 34S pre-rRNA to 18S rRNA and in 40S ribosomal subunit formation. The sequence is that of pre-rRNA 2'-O-ribose RNA methyltransferase FTSJ3 (Ftsj3) from Mus musculus (Mouse).